We begin with the raw amino-acid sequence, 1486 residues long: Phosphatidylinositol 3-kinase C2 domain-containing subunit gamma (1486 aa).

The 87-residue stretch at 285–371 (KTKFNIHIFI…IQLHLQKSRE (87 aa)) folds into the PI3K-RBD domain. In terms of domain architecture, C2 PI3K-type spans 521–669 (LPSHLSFTVY…SPVTLQIDFP (149 aa)). The 177-residue stretch at 684–860 (RSNLEEPLKE…QKLLAALQFC (177 aa)) folds into the PIK helical domain. The PI3K/PI4K catalytic domain maps to 929 to 1207 (DHDACSYFTS…KIKESLECFP (279 aa)). The G-loop stretch occupies residues 935-941 (YFTSNAL). A catalytic loop region spans residues 1071-1079 (GVCDRHNDN). The activation loop stretch occupies residues 1090-1116 (HIDFGKFLGHAQTFGGIKRDRAPFIFT). In terms of domain architecture, PX spans 1240–1352 (LSTTRSIERA…SFFLSEAVQQ (113 aa)). The C2 domain maps to 1369-1486 (KKPKVQLVIS…KWYPLGNSII (118 aa)).

Belongs to the PI3/PI4-kinase family. Highly expressed in liver, prostate and testis. Lower levels in small intestine, kidney and pancreas.

Its subcellular location is the membrane. It carries out the reaction a 1,2-diacyl-sn-glycero-3-phospho-(1D-myo-inositol 4-phosphate) + ATP = a 1,2-diacyl-sn-glycero-3-phospho-(1D-myo-inositol-3,4-bisphosphate) + ADP + H(+). The enzyme catalyses a 1,2-diacyl-sn-glycero-3-phospho-(1D-myo-inositol) + ATP = a 1,2-diacyl-sn-glycero-3-phospho-(1D-myo-inositol-3-phosphate) + ADP + H(+). Its function is as follows. Generates phosphatidylinositol 3-phosphate (PtdIns3P) and phosphatidylinositol 3,4-bisphosphate (PtdIns(3,4)P2) that act as second messengers. May play a role in SDF1A-stimulated chemotaxis. The sequence is that of Phosphatidylinositol 3-kinase C2 domain-containing subunit gamma (PIK3C2G) from Homo sapiens (Human).